The following is an 875-amino-acid chain: Neurotrypsin (875 aa).

The N-terminal stretch at Met1–Xaa20 is a signal peptide. Asn26 carries N-linked (GlcNAc...) asparagine glycosylation. The disordered stretch occupies residues His31–Pro88. Pro residues predominate over residues Thr56–Ala71. Positions Cys93–Cys165 constitute a Kringle domain. Intrachain disulfides connect Cys93-Cys165, Cys109-Cys149, Cys138-Cys163, Cys195-Cys259, Cys208-Cys269, Cys239-Cys249, Cys305-Cys369, Cys318-Cys379, Cys349-Cys359, Cys412-Cys475, Cys425-Cys485, Cys455-Cys465, Cys525-Cys589, Cys538-Cys599, Cys569-Cys579, Cys619-Cys750, Cys661-Cys677, Cys765-Cys831, Cys794-Cys808, and Cys821-Cys850. SRCR domains are found at residues Ile170 to Phe271, Ile280 to Pro381, Ile387 to Pro487, and Val500 to Tyr601. Positions Cys619 to Arg630 are zymogen activation region. The Peptidase S1 domain maps to Ile631–Lys874. His676 functions as the Charge relay system in the catalytic mechanism. N-linked (GlcNAc...) asparagine glycosylation occurs at Asn683. Asp726 functions as the Charge relay system in the catalytic mechanism. Ser825 (charge relay system) is an active-site residue.

The protein belongs to the peptidase S1 family.

The protein resides in the secreted. Its function is as follows. Plays a role in neuronal plasticity and the proteolytic action may subserve structural reorganizations associated with learning and memory operations. The polypeptide is Neurotrypsin (PRSS12) (Nomascus leucogenys (Northern white-cheeked gibbon)).